Consider the following 157-residue polypeptide: CASP-like protein 1 (157 aa).

The Cytoplasmic portion of the chain corresponds to 1–13; the sequence is MKTEARDGGSEWR. A helical transmembrane segment spans residues 14–34; the sequence is WVAIFELFLRLAAIVSTSVAV. Topologically, residues 35–40 are extracellular; that stretch reads YAAMGK. A helical transmembrane segment spans residues 41–61; that stretch reads IFVVAVNGVACFYLLMSLPVS. Residues 62–82 lie on the Cytoplasmic side of the membrane; that stretch reads IFNIMRPHAYPANRVFLNIMD. Residues 83–103 traverse the membrane as a helical segment; it reads MVMVALVTAGALAAGIVYLVE. At 104–121 the chain is on the extracellular side; it reads KAGNARASWVSVWSQFDS. The chain crosses the membrane as a helical span at residues 122-142; sequence SSCFAVLALILHVLLSGVILY. Residues 143-157 lie on the Cytoplasmic side of the membrane; sequence KQALNIKFKKLDSVD.

Belongs to the Casparian strip membrane proteins (CASP) family. In terms of assembly, homodimer and heterodimers.

Its subcellular location is the cell membrane. The polypeptide is CASP-like protein 1 (Picea sitchensis (Sitka spruce)).